Here is a 994-residue protein sequence, read N- to C-terminus: Phosphoenolpyruvate carboxylase (994 aa).

The tract at residues methionine 1 to proline 67 is disordered. 2 stretches are compositionally biased toward low complexity: residues threonine 9–alanine 24 and alanine 34–asparagine 57. Residues histidine 204 and lysine 646 contribute to the active site.

This sequence belongs to the PEPCase type 1 family. It depends on Mg(2+) as a cofactor.

The enzyme catalyses oxaloacetate + phosphate = phosphoenolpyruvate + hydrogencarbonate. Forms oxaloacetate, a four-carbon dicarboxylic acid source for the tricarboxylic acid cycle. The protein is Phosphoenolpyruvate carboxylase of Paraburkholderia xenovorans (strain LB400).